Consider the following 218-residue polypeptide: Small ribosomal subunit protein uS3c (218 aa).

The KH type-2 domain maps to I43–E118.

It belongs to the universal ribosomal protein uS3 family. Part of the 30S ribosomal subunit.

It is found in the plastid. It localises to the chloroplast. The protein is Small ribosomal subunit protein uS3c (rps3) of Phalaenopsis aphrodite subsp. formosana (Moth orchid).